The following is a 334-amino-acid chain: Holliday junction branch migration complex subunit RuvB (334 aa).

The segment at Ala4 to Tyr186 is large ATPase domain (RuvB-L). Residues Ile25, Arg26, Gly67, Lys70, Thr71, Thr72, Glu133–Tyr135, Arg176, Tyr186, and Arg223 each bind ATP. Thr71 contacts Mg(2+). Positions Lys187–Asp257 are small ATPAse domain (RuvB-S). The head domain (RuvB-H) stretch occupies residues Ala260–Lys334. DNA contacts are provided by Arg315 and Arg320.

This sequence belongs to the RuvB family. In terms of assembly, homohexamer. Forms an RuvA(8)-RuvB(12)-Holliday junction (HJ) complex. HJ DNA is sandwiched between 2 RuvA tetramers; dsDNA enters through RuvA and exits via RuvB. An RuvB hexamer assembles on each DNA strand where it exits the tetramer. Each RuvB hexamer is contacted by two RuvA subunits (via domain III) on 2 adjacent RuvB subunits; this complex drives branch migration. In the full resolvosome a probable DNA-RuvA(4)-RuvB(12)-RuvC(2) complex forms which resolves the HJ.

The protein resides in the cytoplasm. The catalysed reaction is ATP + H2O = ADP + phosphate + H(+). Its function is as follows. The RuvA-RuvB-RuvC complex processes Holliday junction (HJ) DNA during genetic recombination and DNA repair, while the RuvA-RuvB complex plays an important role in the rescue of blocked DNA replication forks via replication fork reversal (RFR). RuvA specifically binds to HJ cruciform DNA, conferring on it an open structure. The RuvB hexamer acts as an ATP-dependent pump, pulling dsDNA into and through the RuvAB complex. RuvB forms 2 homohexamers on either side of HJ DNA bound by 1 or 2 RuvA tetramers; 4 subunits per hexamer contact DNA at a time. Coordinated motions by a converter formed by DNA-disengaged RuvB subunits stimulates ATP hydrolysis and nucleotide exchange. Immobilization of the converter enables RuvB to convert the ATP-contained energy into a lever motion, pulling 2 nucleotides of DNA out of the RuvA tetramer per ATP hydrolyzed, thus driving DNA branch migration. The RuvB motors rotate together with the DNA substrate, which together with the progressing nucleotide cycle form the mechanistic basis for DNA recombination by continuous HJ branch migration. Branch migration allows RuvC to scan DNA until it finds its consensus sequence, where it cleaves and resolves cruciform DNA. The chain is Holliday junction branch migration complex subunit RuvB from Vibrio campbellii (strain ATCC BAA-1116).